Here is a 423-residue protein sequence, read N- to C-terminus: SH2 domain-containing protein 5 (423 aa).

One can recognise a PID domain in the interval 28-146 (AQYVGLLPCG…LLCRSFQLAY (119 aa)). The region spanning 296 to 392 (WAFAGISRPC…LDMGRLNPTY (97 aa)) is the SH2 domain. Positions 394-423 (EQDCGPLGRPPRTLRPLSHAKSEAELQGLG) are disordered. Low complexity predominate over residues 398-410 (GPLGRPPRTLRPL).

Interacts with BCR.

The protein localises to the postsynaptic density. Functionally, may be involved in synaptic plasticity regulation through the control of Rac-GTP levels. In Pongo abelii (Sumatran orangutan), this protein is SH2 domain-containing protein 5.